The sequence spans 361 residues: Chorismate synthase (361 aa).

Arg-48 contacts NADP(+). FMN contacts are provided by residues 126-128, Gly-286, 301-305, and Arg-328; these read RFS and KPTPS.

The protein belongs to the chorismate synthase family. Requires FMNH2 as cofactor.

It carries out the reaction 5-O-(1-carboxyvinyl)-3-phosphoshikimate = chorismate + phosphate. Its pathway is metabolic intermediate biosynthesis; chorismate biosynthesis; chorismate from D-erythrose 4-phosphate and phosphoenolpyruvate: step 7/7. In terms of biological role, catalyzes the anti-1,4-elimination of the C-3 phosphate and the C-6 proR hydrogen from 5-enolpyruvylshikimate-3-phosphate (EPSP) to yield chorismate, which is the branch point compound that serves as the starting substrate for the three terminal pathways of aromatic amino acid biosynthesis. This reaction introduces a second double bond into the aromatic ring system. The sequence is that of Chorismate synthase from Korarchaeum cryptofilum (strain OPF8).